Here is a 141-residue protein sequence, read N- to C-terminus: MLEIDNQTPLESDFLLLEKIADVLASTQIIELVLVSDETMREINRDLRDCDYATDVLSFPLEAIPHTPLGSVVINAPLAQENALKLGHSLEDEIALLFIHGVLHLLGYDHEKDKGEQRQKEGELIKAFDLPLSLIERTQEC.

The Zn(2+) site is built by His-100, His-104, and His-110.

It belongs to the endoribonuclease YbeY family. Zn(2+) is required as a cofactor.

Its subcellular location is the cytoplasm. Functionally, single strand-specific metallo-endoribonuclease involved in late-stage 70S ribosome quality control and in maturation of the 3' terminus of the 16S rRNA. The chain is Endoribonuclease YbeY from Helicobacter pylori (strain J99 / ATCC 700824) (Campylobacter pylori J99).